An 838-amino-acid polypeptide reads, in one-letter code: Glycogen phosphorylase, brain form (838 aa).

Alanine 2 carries the post-translational modification N-acetylalanine. Position 15 is a phosphoserine (serine 15). 3 residues coordinate AMP: aspartate 43, tyrosine 197, and arginine 310. Tyrosine 197 carries the post-translational modification Phosphotyrosine. Tyrosine 473 carries the phosphotyrosine modification. The residue at position 524 (serine 524) is a Phosphoserine. A pyridoxal 5'-phosphate-binding site is contributed by lysine 569. The interval 677-678 (TG) is pyridoxal 5'-phosphate. Residue lysine 681 is modified to N6-(pyridoxal phosphate)lysine.

Belongs to the glycogen phosphorylase family. In terms of assembly, homodimer. Dimers associate into a tetramer to form the enzymatically active phosphorylase A. It depends on pyridoxal 5'-phosphate as a cofactor. Post-translationally, phosphorylation of Ser-15 converts phosphorylase B (unphosphorylated) to phosphorylase A.

The enzyme catalyses [(1-&gt;4)-alpha-D-glucosyl](n) + phosphate = [(1-&gt;4)-alpha-D-glucosyl](n-1) + alpha-D-glucose 1-phosphate. Activity of phosphorylase is controlled both by allosteric means (through the non-covalent binding of metabolites) and by covalent modification. Thus AMP allosterically activates, whereas ATP, ADP, and glucose-6-phosphate allosterically inhibit, phosphorylase B. Glycogen phosphorylase that regulates glycogen mobilization. Phosphorylase is an important allosteric enzyme in carbohydrate metabolism. Enzymes from different sources differ in their regulatory mechanisms and in their natural substrates. However, all known phosphorylases share catalytic and structural properties. The polypeptide is Glycogen phosphorylase, brain form (Pygb) (Rattus norvegicus (Rat)).